The sequence spans 65 residues: Large ribosomal subunit protein bL35 (65 aa).

It belongs to the bacterial ribosomal protein bL35 family.

The chain is Large ribosomal subunit protein bL35 from Clostridium botulinum (strain Loch Maree / Type A3).